We begin with the raw amino-acid sequence, 728 residues long: Phosphoribosylformylglycinamidine synthase subunit PurL (728 aa).

Residue His-54 is part of the active site. ATP is bound by residues Tyr-57 and Lys-96. A Mg(2+)-binding site is contributed by Glu-98. Substrate-binding positions include 99-102 (SHNH) and Arg-121. Catalysis depends on His-100, which acts as the Proton acceptor. Mg(2+) is bound at residue Asp-122. Residue Gln-245 participates in substrate binding. Mg(2+) is bound at residue Asp-273. Position 317 to 319 (317 to 319 (ETQ)) interacts with substrate. Residues Asp-495 and Gly-532 each contribute to the ATP site. Residue Asn-533 participates in Mg(2+) binding. Ser-535 lines the substrate pocket.

This sequence belongs to the FGAMS family. As to quaternary structure, monomer. Part of the FGAM synthase complex composed of 1 PurL, 1 PurQ and 2 PurS subunits.

The protein resides in the cytoplasm. It catalyses the reaction N(2)-formyl-N(1)-(5-phospho-beta-D-ribosyl)glycinamide + L-glutamine + ATP + H2O = 2-formamido-N(1)-(5-O-phospho-beta-D-ribosyl)acetamidine + L-glutamate + ADP + phosphate + H(+). Its pathway is purine metabolism; IMP biosynthesis via de novo pathway; 5-amino-1-(5-phospho-D-ribosyl)imidazole from N(2)-formyl-N(1)-(5-phospho-D-ribosyl)glycinamide: step 1/2. In terms of biological role, part of the phosphoribosylformylglycinamidine synthase complex involved in the purines biosynthetic pathway. Catalyzes the ATP-dependent conversion of formylglycinamide ribonucleotide (FGAR) and glutamine to yield formylglycinamidine ribonucleotide (FGAM) and glutamate. The FGAM synthase complex is composed of three subunits. PurQ produces an ammonia molecule by converting glutamine to glutamate. PurL transfers the ammonia molecule to FGAR to form FGAM in an ATP-dependent manner. PurS interacts with PurQ and PurL and is thought to assist in the transfer of the ammonia molecule from PurQ to PurL. The sequence is that of Phosphoribosylformylglycinamidine synthase subunit PurL from Macrococcus caseolyticus (strain JCSC5402) (Macrococcoides caseolyticum).